The primary structure comprises 523 residues: Polypyrimidine tract-binding protein 3 (523 aa).

The disordered stretch occupies residues 1–25 (MNNSTSAGVYANGNDNKKFKGDRPP). RRM domains are found at residues 30 to 114 (RVLH…NLPN), 153 to 229 (LRII…FSKL), and 329 to 403 (SVLL…LSKH). A Glycyl lysine isopeptide (Lys-Gly) (interchain with G-Cter in SUMO2) cross-link involves residue lysine 36. Residue tyrosine 98 is modified to Phosphotyrosine. Threonine 109 carries the post-translational modification Phosphothreonine. Lysine 187 is covalently cross-linked (Glycyl lysine isopeptide (Lys-Gly) (interchain with G-Cter in SUMO2)). Lysine 394 carries the N6-acetyllysine modification. The tract at residues 406-426 (VQLPREGQEDQGLTKDFSNSP) is disordered. A Phosphoserine modification is found at serine 425. One can recognise an RRM 4 domain in the interval 446–521 (ATLHLSNIPP…HHLRVSFSKS (76 aa)).

In terms of assembly, interacts with THBS4 (via the acidic amphipathic C-terminus). As to expression, detected specifically in spleen, thymus, lungs, and bone marrow.

Its function is as follows. RNA-binding protein that mediates pre-mRNA alternative splicing regulation. Plays a role in the regulation of cell proliferation, differentiation and migration. Positive regulator of EPO-dependent erythropoiesis. Participates in cell differentiation regulation by repressing tissue-specific exons. Promotes Fas exon 6 skipping. Binds RNA, preferentially to both poly(G) and poly(U). The protein is Polypyrimidine tract-binding protein 3 (Ptbp3) of Rattus norvegicus (Rat).